A 191-amino-acid polypeptide reads, in one-letter code: Adenylate kinase (191 aa).

10 to 15 (AAGKGT) is an ATP binding site. The interval 30–59 (STGDMLRAAIASGSELGQRVKGVLDRGELV) is NMP. AMP is bound by residues Thr-31, Arg-36, 57–59 (ELV), 85–88 (GFPR), and Gln-92. Residues 126 to 136 (KRFEEQGRPDD) form an LID region. Arg-127 contacts ATP. 2 residues coordinate AMP: Arg-133 and Arg-144. Gly-172 contacts ATP.

Belongs to the adenylate kinase family. In terms of assembly, monomer.

The protein resides in the cytoplasm. The enzyme catalyses AMP + ATP = 2 ADP. Its pathway is purine metabolism; AMP biosynthesis via salvage pathway; AMP from ADP: step 1/1. Functionally, catalyzes the reversible transfer of the terminal phosphate group between ATP and AMP. Plays an important role in cellular energy homeostasis and in adenine nucleotide metabolism. The protein is Adenylate kinase of Caulobacter vibrioides (strain ATCC 19089 / CIP 103742 / CB 15) (Caulobacter crescentus).